Consider the following 255-residue polypeptide: 3-alpha-(or 20-beta)-hydroxysteroid dehydrogenase (255 aa).

10 to 34 (IITGGARGLGAEAARQAVAAGARVV) contributes to the NAD(+) binding site. A substrate-binding site is contributed by serine 139. The Proton acceptor role is filled by tyrosine 152.

The protein belongs to the short-chain dehydrogenases/reductases (SDR) family. As to quaternary structure, homotetramer.

The enzyme catalyses androstan-3alpha,17beta-diol + NAD(+) = 17beta-hydroxyandrostanone + NADH + H(+). It participates in lipid metabolism; C21-steroid hormone metabolism. This is 3-alpha-(or 20-beta)-hydroxysteroid dehydrogenase from Streptomyces exfoliatus (Streptomyces hydrogenans).